The primary structure comprises 146 residues: Angiogenin (146 aa).

An N-terminal signal peptide occupies residues 1–24 (MVMGLHLLLLVFILGLGLTPPTLA). Q25 is subject to Pyrrolidone carboxylic acid. H37 functions as the Proton acceptor in the catalytic mechanism. 3 disulfide bridges follow: C50/C105, C63/C116, and C81/C131. The Nucleolar localization signal motif lies at 55 to 59 (RLRNM). C105 is a tRNA binding site. Catalysis depends on H138, which acts as the Proton donor.

It belongs to the pancreatic ribonuclease family. Homodimer. Interacts with RNH1; inhibiting ANG ribonuclease activity. Interacts with PCNA.

It is found in the secreted. The protein resides in the nucleus. The protein localises to the nucleolus. It localises to the cytoplasm. Its subcellular location is the stress granule. With respect to regulation, has weak tRNA ribonuclease activity by itself due to partial autoinhibition by its C-terminus, which folds into a short alpha-helix that partially occludes the substrate-binding site. In absence of stress, the ribonuclease activity is inhibited by RNH1 in the cytoplasm. In response to stress, dissociates from RNH1 in the cytoplasm and associates with cytoplasmic ribosomes with vacant A-sites: ribosomes directly activate the tRNA ribonuclease activity of ANG by refolding the C-terminal alpha-helix. In response to stress, the angiogenic activity of ANG is inhibited by RNH1 in the nucleus. Secreted ribonuclease that can either promote or restrict cell proliferation of target cells, depending on the context. Endocytosed in target cells via its receptor PLXNB2 and translocates to the cytoplasm or nucleus. Under stress conditions, localizes to the cytoplasm and promotes the assembly of stress granules (SGs): specifically cleaves a subset of tRNAs within anticodon loops to produce tRNA-derived stress-induced fragments (tiRNAs), resulting in translation repression and inhibition of cell proliferation. tiRNas also prevent formation of apoptosome, thereby promoting cell survival. Preferentially cleaves RNAs between a pyrimidine and an adenosine residue, suggesting that it cleaves the anticodon loop of tRNA(Ala) (32-UUAGCAU-38) after positions 33 and 36. Cleaves a subset of tRNAs, including tRNA(Ala), tRNA(Glu), tRNA(Gly), tRNA(Lys), tRNA(Val), tRNA(His), tRNA(Asp) and tRNA(Sec). Under growth conditions and in differentiated cells, translocates to the nucleus and stimulates ribosomal RNA (rRNA) transcription, including that containing the initiation site sequences of 45S rRNA, thereby promoting cell growth and proliferation. Angiogenin induces vascularization of normal and malignant tissues via its ability to promote rRNA transcription. Involved in hematopoietic stem and progenitor cell (HSPC) growth and survival by promoting rRNA transcription in growth conditions and inhibiting translation in response to stress, respectively. Mediates the crosstalk between myeloid and intestinal epithelial cells to protect the intestinal epithelial barrier integrity: secreted by myeloid cells and promotes intestinal epithelial cells proliferation and survival. Also mediates osteoclast-endothelial cell crosstalk in growing bone: produced by osteoclasts and protects the neighboring vascular cells against senescence by promoting rRNA transcription. The polypeptide is Angiogenin (ANG) (Aotus trivirgatus (Three-striped night monkey)).